The sequence spans 342 residues: Thioredoxin reductase 2, mitochondrial (342 aa).

A mitochondrion-targeting transit peptide spans 1 to 23 (MIKHIVSPFRTNFVGISKSVLSR). Residues 34–37 (SGPA), 56–68 (EGMM…AGGQ), 63–64 (IA), glutamine 68, asparagine 77, valine 110, cysteine 168, aspartate 311, 311–320 (DVQDSRYRQA), and 318–320 (RQA) contribute to the FAD site. A disulfide bridge connects residues cysteine 165 and cysteine 168.

This sequence belongs to the class-II pyridine nucleotide-disulfide oxidoreductase family. Homodimer. Requires FAD as cofactor.

It is found in the mitochondrion. It catalyses the reaction [thioredoxin]-dithiol + NADP(+) = [thioredoxin]-disulfide + NADPH + H(+). Its function is as follows. Acts on mitochondrial thioredoxin 3. Implicated in the defense against oxidative stress. This chain is Thioredoxin reductase 2, mitochondrial, found in Saccharomyces cerevisiae (strain ATCC 204508 / S288c) (Baker's yeast).